A 214-amino-acid chain; its full sequence is Probable nicotinate-nucleotide adenylyltransferase (214 aa).

Belongs to the NadD family.

The enzyme catalyses nicotinate beta-D-ribonucleotide + ATP + H(+) = deamido-NAD(+) + diphosphate. Its pathway is cofactor biosynthesis; NAD(+) biosynthesis; deamido-NAD(+) from nicotinate D-ribonucleotide: step 1/1. Functionally, catalyzes the reversible adenylation of nicotinate mononucleotide (NaMN) to nicotinic acid adenine dinucleotide (NaAD). The protein is Probable nicotinate-nucleotide adenylyltransferase of Psychromonas ingrahamii (strain DSM 17664 / CCUG 51855 / 37).